The sequence spans 266 residues: MSKIKELFESGKFKSAFIPYFTLGDPNYNDSIEFGKTILDGGADILELGIPFSDPVADGPVIQRAVARSLKNKFSFDEIFRVTKQIHLHKQETPLVYLTYFNPIYHCGITKFLDNAKDSGVVGLVIPDLPFDTIESETLFQELRLRDMDLIHLVTPASTKKRIEALRKTSTGFIYYVTSFGVTGERREFSVDLKERIRFLKDTIQLPICAGFGISTPEQASQIAGYADGIIIGSAIQRVIEENGQDASKAKNVLADYITKIRASIS.

Residues E47 and D58 each act as proton acceptor in the active site.

The protein belongs to the TrpA family. As to quaternary structure, tetramer of two alpha and two beta chains.

The catalysed reaction is (1S,2R)-1-C-(indol-3-yl)glycerol 3-phosphate + L-serine = D-glyceraldehyde 3-phosphate + L-tryptophan + H2O. The protein operates within amino-acid biosynthesis; L-tryptophan biosynthesis; L-tryptophan from chorismate: step 5/5. Functionally, the alpha subunit is responsible for the aldol cleavage of indoleglycerol phosphate to indole and glyceraldehyde 3-phosphate. This chain is Tryptophan synthase alpha chain, found in Leptospira biflexa serovar Patoc (strain Patoc 1 / Ames).